Consider the following 758-residue polypeptide: 5-methyltetrahydropteroyltriglutamate--homocysteine methyltransferase (758 aa).

5-methyltetrahydropteroyltri-L-glutamate-binding positions include 16 to 19 (RELK) and lysine 112. L-homocysteine contacts are provided by residues 433 to 435 (IGS) and glutamate 486. L-methionine is bound by residues 433-435 (IGS) and glutamate 486. 5-methyltetrahydropteroyltri-L-glutamate-binding positions include 517–518 (RC) and tryptophan 563. Residue aspartate 601 coordinates L-homocysteine. Aspartate 601 contacts L-methionine. Glutamate 607 serves as a coordination point for 5-methyltetrahydropteroyltri-L-glutamate. Positions 643, 645, and 667 each coordinate Zn(2+). Histidine 696 functions as the Proton donor in the catalytic mechanism. Cysteine 728 provides a ligand contact to Zn(2+).

The protein belongs to the vitamin-B12 independent methionine synthase family. Requires Zn(2+) as cofactor.

It catalyses the reaction 5-methyltetrahydropteroyltri-L-glutamate + L-homocysteine = tetrahydropteroyltri-L-glutamate + L-methionine. The protein operates within amino-acid biosynthesis; L-methionine biosynthesis via de novo pathway; L-methionine from L-homocysteine (MetE route): step 1/1. Functionally, catalyzes the transfer of a methyl group from 5-methyltetrahydrofolate to homocysteine resulting in methionine formation. The sequence is that of 5-methyltetrahydropteroyltriglutamate--homocysteine methyltransferase from Neisseria meningitidis serogroup A / serotype 4A (strain DSM 15465 / Z2491).